Here is a 1248-residue protein sequence, read N- to C-terminus: ATP-dependent helicase/nuclease subunit A (1248 aa).

The UvrD-like helicase ATP-binding domain maps to 4-480 (TKWTKEQYAA…ILLFKNFRSR (477 aa)). Position 25 to 32 (25 to 32 (AAAGAGKT)) interacts with ATP. In terms of domain architecture, UvrD-like helicase C-terminal spans 523-820 (ETVVGGAIEL…RLMSIHKSKG (298 aa)).

It belongs to the helicase family. AddA subfamily. In terms of assembly, heterodimer of AddA and AddB/RexB. Mg(2+) is required as a cofactor.

The enzyme catalyses Couples ATP hydrolysis with the unwinding of duplex DNA by translocating in the 3'-5' direction.. It catalyses the reaction ATP + H2O = ADP + phosphate + H(+). Functionally, the heterodimer acts as both an ATP-dependent DNA helicase and an ATP-dependent, dual-direction single-stranded exonuclease. Recognizes the chi site generating a DNA molecule suitable for the initiation of homologous recombination. The AddA nuclease domain is required for chi fragment generation; this subunit has the helicase and 3' -&gt; 5' nuclease activities. The protein is ATP-dependent helicase/nuclease subunit A of Ruminiclostridium cellulolyticum (strain ATCC 35319 / DSM 5812 / JCM 6584 / H10) (Clostridium cellulolyticum).